The sequence spans 351 residues: Increased glyphosate resistance protein (351 aa).

The segment covering 1–18 (MHREDDSTSTGRREERLS) has biased composition (basic and acidic residues). The interval 1–29 (MHREDDSTSTGRREERLSTGKGDSLQPGP) is disordered.

In terms of biological role, confers an increase in glyphosate resistance when expressed in E.coli. This Pseudomonas sp. (strain PG2982) protein is Increased glyphosate resistance protein.